The following is a 1369-amino-acid chain: DNA-directed RNA polymerase subunit beta' (1369 aa).

The segment at 1-43 (MTSSSPKTRKSSTKSKAKRGSKSKKAAEIKAVQRLSKTPPPFR) is disordered. The span at 7-24 (KTRKSSTKSKAKRGSKSK) shows a compositional bias: basic residues. Zn(2+) is bound by residues Cys-253, Cys-320, Cys-327, and Cys-330. The segment at 1294 to 1369 (TVDMPSSPVA…LQEEGLLSDE (76 aa)) is disordered. Residues 1342-1351 (DDELSAEDQM) show a composition bias toward acidic residues. A compositionally biased stretch (low complexity) spans 1357 to 1369 (LEGLQEEGLLSDE).

It belongs to the RNA polymerase beta' chain family. RpoC2 subfamily. In cyanobacteria the RNAP catalytic core is composed of 2 alpha, 1 beta, 1 beta', 1 gamma and 1 omega subunit. When a sigma factor is associated with the core the holoenzyme is formed, which can initiate transcription. Requires Zn(2+) as cofactor.

The catalysed reaction is RNA(n) + a ribonucleoside 5'-triphosphate = RNA(n+1) + diphosphate. In terms of biological role, DNA-dependent RNA polymerase catalyzes the transcription of DNA into RNA using the four ribonucleoside triphosphates as substrates. This chain is DNA-directed RNA polymerase subunit beta', found in Prochlorococcus marinus (strain NATL1A).